A 147-amino-acid polypeptide reads, in one-letter code: 3-dehydroquinate dehydratase (147 aa).

Y23 acts as the Proton acceptor in catalysis. The substrate site is built by N74, H80, and D87. H100 functions as the Proton donor in the catalytic mechanism. Substrate-binding positions include 101 to 102 and R111; that span reads LS.

It belongs to the type-II 3-dehydroquinase family. As to quaternary structure, homododecamer.

The catalysed reaction is 3-dehydroquinate = 3-dehydroshikimate + H2O. Its pathway is metabolic intermediate biosynthesis; chorismate biosynthesis; chorismate from D-erythrose 4-phosphate and phosphoenolpyruvate: step 3/7. Its function is as follows. Catalyzes a trans-dehydration via an enolate intermediate. The protein is 3-dehydroquinate dehydratase of Clostridium botulinum (strain 657 / Type Ba4).